The following is a 440-amino-acid chain: Probable exopolygalacturonase B (440 aa).

The N-terminal stretch at 1 to 20 (MRLHFLPLVALCATTASSLA) is a signal peptide. Residues Asn65, Asn190, and Asn230 are each glycosylated (N-linked (GlcNAc...) asparagine). The active-site Proton donor is Asp260. Cys262 and Cys279 are disulfide-bonded. Residues Asn268 and Asn280 are each glycosylated (N-linked (GlcNAc...) asparagine). The active site involves His283. N-linked (GlcNAc...) asparagine glycosylation is found at Asn307, Asn334, and Asn371. Cysteines 397 and 403 form a disulfide. N-linked (GlcNAc...) asparagine glycosylation occurs at Asn412.

The protein belongs to the glycosyl hydrolase 28 family.

Its subcellular location is the secreted. It carries out the reaction [(1-&gt;4)-alpha-D-galacturonosyl](n) + H2O = alpha-D-galacturonate + [(1-&gt;4)-alpha-D-galacturonosyl](n-1). In terms of biological role, specific in hydrolyzing the terminal glycosidic bond of polygalacturonic acid and oligogalacturonates. This is Probable exopolygalacturonase B (pgxB) from Emericella nidulans (strain FGSC A4 / ATCC 38163 / CBS 112.46 / NRRL 194 / M139) (Aspergillus nidulans).